Reading from the N-terminus, the 177-residue chain is von Ebner gland protein 1 (177 aa).

An N-terminal signal peptide occupies residues 1-18; the sequence is MKALLLTFGLSLLAALQA. Residues cysteine 80 and cysteine 172 are joined by a disulfide bond.

This sequence belongs to the calycin superfamily. Lipocalin family. As to quaternary structure, homodimer.

The protein resides in the secreted. In terms of biological role, could play a role in taste reception. Could be necessary for the concentration and delivery of sapid molecules in the gustatory system. This Rattus norvegicus (Rat) protein is von Ebner gland protein 1 (Vegp1).